The sequence spans 396 residues: Protein Njmu-R1 (396 aa).

The disordered stretch occupies residues methionine 1–alanine 78. Residues serine 8 and serine 18 each carry the phosphoserine modification. The segment covering methionine 9–serine 24 has biased composition (acidic residues). Polar residues predominate over residues glycine 58–threonine 67.

As to quaternary structure, component of the complex WDR11 composed of C17orf75, FAM91A1 and WDR11; FAM91A1 and WDR11 are required for proper location of the complex. Interacts with TBC1D23; this interaction may be indirect and recruits TBC1D23 to AP-1-derived vesicles. As to expression, highly expressed in testis and also expressed in fetal testis.

Its subcellular location is the golgi apparatus. It is found in the trans-Golgi network. The protein localises to the cytoplasmic vesicle. Its function is as follows. As component of the WDR11 complex acts together with TBC1D23 to facilitate the golgin-mediated capture of vesicles generated using AP-1. May have a role in spermatogenesis. In Homo sapiens (Human), this protein is Protein Njmu-R1 (C17orf75).